The chain runs to 185 residues: Ribosome-recycling factor (185 aa).

The segment at Leu163–Gly185 is disordered. Residues Ala167–Gly185 are compositionally biased toward basic and acidic residues.

Belongs to the RRF family.

The protein resides in the cytoplasm. In terms of biological role, responsible for the release of ribosomes from messenger RNA at the termination of protein biosynthesis. May increase the efficiency of translation by recycling ribosomes from one round of translation to another. This chain is Ribosome-recycling factor, found in Latilactobacillus sakei subsp. sakei (strain 23K) (Lactobacillus sakei subsp. sakei).